Consider the following 244-residue polypeptide: UPF0246 protein SGO_1307 (244 aa).

This sequence belongs to the UPF0246 family.

This is UPF0246 protein SGO_1307 from Streptococcus gordonii (strain Challis / ATCC 35105 / BCRC 15272 / CH1 / DL1 / V288).